A 174-amino-acid polypeptide reads, in one-letter code: Solute carrier family 2, facilitated glucose transporter member 4 (174 aa).

Topologically, residues 1–19 (QQIGSEDGEPPQQRVTGTL) are cytoplasmic. The interaction with SRFBP1 stretch occupies residues 2–8 (QIGSEDG). S5 bears the Phosphoserine mark. Residues 20–40 (VLAVFSAVLGSLQFGYNIGVI) traverse the membrane as a helical segment. The Extracellular segment spans residues 41 to 76 (NAPQKVIEQSYNETWLGRQGPNGPGSIPPGTLTTLW). The N-linked (GlcNAc...) asparagine glycan is linked to N52. The helical transmembrane segment at 77–97 (ALSVAIFSVGGMFSSFLLGII) threads the bilayer. Topologically, residues 98–114 (SQWLGRKKAMLFNNTLA) are cytoplasmic. Residues 115–135 (VLAGALMGLAKAAASYEMLIL) form a helical membrane-spanning segment. At 136–137 (GR) the chain is on the extracellular side. The chain crosses the membrane as a helical span at residues 138–158 (FLIGAYSGLASGLVPMYVGEI). Residues 159–166 (APTHLRGA) lie on the Cytoplasmic side of the membrane. The helical transmembrane segment at 167–174 (LGTLNQLA) threads the bilayer.

The protein belongs to the major facilitator superfamily. Sugar transporter (TC 2.A.1.1) family. Glucose transporter subfamily. Binds to DAXX. Interacts via its N-terminus with SRFBP1. Interacts with NDUFA9. Interacts with TRARG1; the interaction is required for proper SLC2A4 recycling after insulin stimulation. In terms of processing, sumoylated. Palmitoylated. Palmitoylation by ZDHHC7 controls the insulin-dependent translocation of GLUT4 to the plasma membrane.

The protein resides in the cell membrane. It is found in the endomembrane system. It localises to the cytoplasm. Its subcellular location is the perinuclear region. The catalysed reaction is D-glucose(out) = D-glucose(in). In terms of biological role, insulin-regulated facilitative glucose transporter, which plays a key role in removal of glucose from circulation. Response to insulin is regulated by its intracellular localization: in the absence of insulin, it is efficiently retained intracellularly within storage compartments in muscle and fat cells. Upon insulin stimulation, translocates from these compartments to the cell surface where it transports glucose from the extracellular milieu into the cell. The sequence is that of Solute carrier family 2, facilitated glucose transporter member 4 from Sus scrofa (Pig).